Here is a 55-residue protein sequence, read N- to C-terminus: Putative virulence-regulating protein PA2146 (55 aa).

Positions 1 to 55 (MAQHQGGKGNFAEDPKRASEAGKKGGQASGGNFKNDPQRASEAGKKGGQRSHGGN) are disordered. Composition is skewed to basic and acidic residues over residues 11-23 (FAED…EAGK) and 36-45 (DPQRASEAGK).

The protein belongs to the con-10 family.

In terms of biological role, may be involved in the regulation of the production of pyocyanine, one of the major virulence factors secreted by P.aeruginosa, and other virulence factors. This is Putative virulence-regulating protein PA2146 from Pseudomonas aeruginosa (strain ATCC 15692 / DSM 22644 / CIP 104116 / JCM 14847 / LMG 12228 / 1C / PRS 101 / PAO1).